We begin with the raw amino-acid sequence, 457 residues long: MQKYLKEARSLLALGIPVIIAQFSQTAMGVVDTVMAGSVSATDMSAVAVGTSIWLPVILFGYGLLLALTPIIAQMNGSGRRNLIASQTQQGFWLAIFLSIIIIAILYNSKFLIDRQHNIDPILAEKAVGFIHAIMWGAPGYLFYQVLRNQCEGLSKTKPGMVISFLGLLINIPINYIFIYGKFGAPALGGVGCGVATASVYWVMFLLMRWYVKRASSQRDIRPKHRFAAPEWHILKRISALGLPIAMAVFFEITLFAIVALLISPLGVTAVAGHQIAQNFSSLMFMFPISLAAATTIRVGYNLGKKSIENARISAYTGIMVGLVFACLTATFSIILREPIALMYNDNPEVITMASHLMLFAALYQLSDAIQVVGAGVLRGYKDTRSIFYITFIAFWILGLPSGYILGLTDYIVPAMGPQGFWIGFIIGLTASAVMIFARISWTQKQPDEVILQHSTH.

Transmembrane regions (helical) follow at residues 11–31 (LLAL…MGVV), 53–73 (IWLP…PIIA), 93–113 (WLAI…KFLI), 127–147 (AVGF…YQVL), 160–180 (GMVI…IFIY), 188–208 (LGGV…FLLM), 243–263 (LPIA…ALLI), 280–300 (FSSL…IRVG), 316–336 (YTGI…SIIL), 357–377 (LMLF…GAGV), 387–407 (IFYI…YILG), and 418–438 (PQGF…MIFA).

The protein belongs to the multi antimicrobial extrusion (MATE) (TC 2.A.66.1) family. MdtK subfamily.

The protein localises to the cell inner membrane. Its function is as follows. Multidrug efflux pump that functions probably as a Na(+)/drug antiporter. The sequence is that of Multidrug resistance protein MdtK from Photorhabdus laumondii subsp. laumondii (strain DSM 15139 / CIP 105565 / TT01) (Photorhabdus luminescens subsp. laumondii).